A 449-amino-acid chain; its full sequence is MLETPKVLLKNLQDCKIHFIGIGGIGISGLAKYLKAQGATISGSDIAISPSVKYLKALGVEINIPHDPKAINNQDVIIHSAIIKEDNTEIQRAKELEIPILSRKDALYSILKDKRVFSVCGAHGKSSITAMLSAICPAFGAIIGAHSKEFDSNVRESANDSLVFEADESDSSFLFSNPFCAIVPNTEPEHLEHYDHDLERFFFAYEYFLDHAQKRVIYKEDPFLKNYSKDAIVLEKKDIYNIQYILKDGEPYTSFELKDLGAFLVWGLGEHNATNASLAILSALDELNLEEIRNNLLNFKGIKKRFDILQKNALILIDDYAHHPTEISATLKSARIYADLLDTQEKIVVIWQAHKYSRLMDNLEEFKKCFLEHCDRLIILPVYSASEVKRDIDLKAHFKHYNPTFIDRVRKKGDFLELLVNDNVVETIEKGFVIGFGAGDITYQLRGEM.

121 to 127 (GAHGKSS) contributes to the ATP binding site.

It belongs to the MurCDEF family.

It localises to the cytoplasm. The catalysed reaction is UDP-N-acetyl-alpha-D-muramate + L-alanine + ATP = UDP-N-acetyl-alpha-D-muramoyl-L-alanine + ADP + phosphate + H(+). It functions in the pathway cell wall biogenesis; peptidoglycan biosynthesis. Functionally, cell wall formation. The sequence is that of UDP-N-acetylmuramate--L-alanine ligase from Helicobacter pylori (strain P12).